Reading from the N-terminus, the 102-residue chain is Small integral membrane protein 29 (102 aa).

An N-linked (GlcNAc...) asparagine glycan is attached at Asn3. Residues 21 to 41 traverse the membrane as a helical segment; it reads VLGPFFLITLVGVVVAVVMYV.

As to expression, expressed in spleen, thymus, prostate, testis, uterus, small intestine, colon and peripheral blood leukocytes.

The protein resides in the membrane. This chain is Small integral membrane protein 29, found in Homo sapiens (Human).